A 312-amino-acid chain; its full sequence is Cytochrome c biogenesis protein CcsA (312 aa).

8 helical membrane passes run 12 to 32, 47 to 67, 72 to 92, 98 to 118, 144 to 164, 220 to 240, 254 to 271, and 281 to 301; these read NLVFGILLFAMTIYWISLSFF, IVANILLFFILGSRWIVAGYF, LYESLLFLTWTLLTIYLYVEF, LVGAILIPVALLINGFANLTL, MMLSYGTLIMGSLLCILFLVI, IIGLGFPFLTIGIIAGGVWAN, TWALITWIVFATYLHSRI, and AILGGLGFFVIWICYLGVNFL.

Belongs to the CcmF/CycK/Ccl1/NrfE/CcsA family. As to quaternary structure, may interact with Ccs1.

The protein resides in the plastid. Its subcellular location is the chloroplast thylakoid membrane. Required during biogenesis of c-type cytochromes (cytochrome c6 and cytochrome f) at the step of heme attachment. The sequence is that of Cytochrome c biogenesis protein CcsA from Trieres chinensis (Marine centric diatom).